The sequence spans 398 residues: Keratinocyte differentiation factor 1 (398 aa).

2 disordered regions span residues 1–60 (MPRP…SITF) and 123–156 (AEAN…STMG). A compositionally biased stretch (basic and acidic residues) spans 44–55 (RPDPKDPGHHGP). Serine 218 is modified (phosphoserine). Disordered stretches follow at residues 307 to 340 (RKSR…TMVG) and 369 to 392 (GAPG…SGAP). Residues 377-389 (HDSSFQGTDTDSS) show a composition bias toward polar residues.

Its subcellular location is the cytoplasm. The protein localises to the cell junction. In terms of biological role, plays a role in the regulation of the epidermis formation during early development. Required both as an inhibitor of basal cell proliferation and a promoter of differentiation of basal progenitor cell progeny. The polypeptide is Keratinocyte differentiation factor 1 (KDF1) (Homo sapiens (Human)).